The following is a 149-amino-acid chain: Arginine repressor (149 aa).

It belongs to the ArgR family.

It localises to the cytoplasm. It participates in amino-acid biosynthesis; L-arginine biosynthesis [regulation]. Functionally, regulates arginine biosynthesis genes. The polypeptide is Arginine repressor (Chlorobaculum parvum (strain DSM 263 / NCIMB 8327) (Chlorobium vibrioforme subsp. thiosulfatophilum)).